The chain runs to 771 residues: Solute carrier family 7 member 14 (771 aa).

6 helical membrane-spanning segments follow: residues 58–78 (LISL…SGLV), 83–103 (AGPG…LSGV), 130–150 (FVAF…TAAG), 187–207 (YPDL…ALGV), 216–236 (VLNV…FFFI), and 251–271 (WSGV…FDII). Residue N282 is glycosylated (N-linked (GlcNAc...) asparagine). The next 5 membrane-spanning stretches (helical) occupy residues 291 to 311 (ASLV…TLMV), 336 to 356 (FVVA…SLFP), 360 to 380 (VIYA…VSSY), 384 to 404 (PVVA…LVSL), and 407 to 427 (LIEM…VCVL). Phosphoserine occurs at positions 465, 468, and 488. 4 helical membrane passes run 565–585 (VTIC…FIIF), 596–616 (WAIL…FVIL), 628–648 (MAPC…YLML), and 655–675 (WIRF…YGIW). N-linked (GlcNAc...) asparagine glycosylation occurs at N676. A disordered region spans residues 712–771 (TEGESQENWGGPAEDKGFYYQQMSDTQPNTRTSSKAKSKSKHKQNSEALIANDELDYSPE). Positions 732–743 (QQMSDTQPNTRT) are enriched in polar residues. Residues 745–754 (SKAKSKSKHK) show a composition bias toward basic residues. Phosphoserine occurs at positions 757 and 769.

The protein belongs to the amino acid-polyamine-organocation (APC) superfamily. Cationic amino acid transporter (CAT) (TC 2.A.3.3) family.

It is found in the lysosome membrane. It catalyses the reaction 4-aminobutanoate(in) = 4-aminobutanoate(out). Its function is as follows. Imports 4-aminobutanoate (GABA) into lysosomes. May act as a GABA sensor that regulates mTORC2-dependent INS signaling and gluconeogenesis. The transport mechanism and substrate selectivity remain to be elucidated. This is Solute carrier family 7 member 14 from Bos taurus (Bovine).